Reading from the N-terminus, the 360-residue chain is sn-glycerol-3-phosphate import ATP-binding protein UgpC (360 aa).

The ABC transporter domain maps to 4-235 (LSLKGVRKSY…PATTFVASFI (232 aa)). Residue 37 to 44 (GPSGCGKS) participates in ATP binding.

This sequence belongs to the ABC transporter superfamily. sn-glycerol-3-phosphate importer (TC 3.A.1.1.3) family. In terms of assembly, the complex is composed of two ATP-binding proteins (UgpC), two transmembrane proteins (UgpA and UgpE) and a solute-binding protein (UgpB).

The protein localises to the cell inner membrane. It carries out the reaction sn-glycerol 3-phosphate(out) + ATP + H2O = sn-glycerol 3-phosphate(in) + ADP + phosphate + H(+). Part of the ABC transporter complex UgpBAEC involved in sn-glycerol-3-phosphate (G3P) import. Responsible for energy coupling to the transport system. The sequence is that of sn-glycerol-3-phosphate import ATP-binding protein UgpC from Burkholderia pseudomallei (strain 1710b).